A 353-amino-acid chain; its full sequence is Nicotinate-nucleotide--dimethylbenzimidazole phosphoribosyltransferase (353 aa).

E319 serves as the catalytic Proton acceptor.

It belongs to the CobT family.

The enzyme catalyses 5,6-dimethylbenzimidazole + nicotinate beta-D-ribonucleotide = alpha-ribazole 5'-phosphate + nicotinate + H(+). It functions in the pathway nucleoside biosynthesis; alpha-ribazole biosynthesis; alpha-ribazole from 5,6-dimethylbenzimidazole: step 1/2. In terms of biological role, catalyzes the synthesis of alpha-ribazole-5'-phosphate from nicotinate mononucleotide (NAMN) and 5,6-dimethylbenzimidazole (DMB). The sequence is that of Nicotinate-nucleotide--dimethylbenzimidazole phosphoribosyltransferase from Chlorobaculum tepidum (strain ATCC 49652 / DSM 12025 / NBRC 103806 / TLS) (Chlorobium tepidum).